The primary structure comprises 246 residues: Pyridoxine 5'-phosphate synthase (246 aa).

Position 12 (Asn-12) interacts with 3-amino-2-oxopropyl phosphate. 14–15 is a binding site for 1-deoxy-D-xylulose 5-phosphate; it reads DH. Arg-23 contributes to the 3-amino-2-oxopropyl phosphate binding site. Catalysis depends on His-48, which acts as the Proton acceptor. Residues Arg-50 and His-55 each contribute to the 1-deoxy-D-xylulose 5-phosphate site. The active-site Proton acceptor is the Glu-75. Thr-105 provides a ligand contact to 1-deoxy-D-xylulose 5-phosphate. The active-site Proton donor is His-196. 3-amino-2-oxopropyl phosphate-binding positions include Gly-197 and 218–219; that span reads GH.

The protein belongs to the PNP synthase family. As to quaternary structure, homooctamer; tetramer of dimers.

The protein resides in the cytoplasm. It catalyses the reaction 3-amino-2-oxopropyl phosphate + 1-deoxy-D-xylulose 5-phosphate = pyridoxine 5'-phosphate + phosphate + 2 H2O + H(+). Its pathway is cofactor biosynthesis; pyridoxine 5'-phosphate biosynthesis; pyridoxine 5'-phosphate from D-erythrose 4-phosphate: step 5/5. Functionally, catalyzes the complicated ring closure reaction between the two acyclic compounds 1-deoxy-D-xylulose-5-phosphate (DXP) and 3-amino-2-oxopropyl phosphate (1-amino-acetone-3-phosphate or AAP) to form pyridoxine 5'-phosphate (PNP) and inorganic phosphate. This Thioalkalivibrio sulfidiphilus (strain HL-EbGR7) protein is Pyridoxine 5'-phosphate synthase.